The following is a 171-amino-acid chain: Large ribosomal subunit protein bL17 (171 aa).

The segment covering 140-152 (KREIQTKAREEKR) has biased composition (basic and acidic residues). The tract at residues 140-171 (KREIQTKAREEKRATRKSNSAPVNKETTSKKK) is disordered. The span at 156–165 (KSNSAPVNKE) shows a compositional bias: polar residues.

The protein belongs to the bacterial ribosomal protein bL17 family. As to quaternary structure, part of the 50S ribosomal subunit. Contacts protein L32.

The polypeptide is Large ribosomal subunit protein bL17 (Leptospira interrogans serogroup Icterohaemorrhagiae serovar Lai (strain 56601)).